A 137-amino-acid chain; its full sequence is Large ribosomal subunit protein uL16 (137 aa).

Belongs to the universal ribosomal protein uL16 family. Part of the 50S ribosomal subunit.

Its function is as follows. Binds 23S rRNA and is also seen to make contacts with the A and possibly P site tRNAs. The sequence is that of Large ribosomal subunit protein uL16 from Brucella abortus (strain S19).